Here is a 229-residue protein sequence, read N- to C-terminus: Large ribosomal subunit protein uL1 (229 aa).

As to quaternary structure, part of the 50S ribosomal subunit.

In terms of biological role, binds directly to 23S rRNA. The L1 stalk is quite mobile in the ribosome, and is involved in E site tRNA release. Functionally, protein L1 is also a translational repressor protein, it controls the translation of the L11 operon by binding to its mRNA. The protein is Large ribosomal subunit protein uL1 of Rhodopseudomonas palustris (strain ATCC BAA-98 / CGA009).